Here is a 219-residue protein sequence, read N- to C-terminus: 23.6 kDa heat shock protein, mitochondrial (219 aa).

Residues 1 to 29 (MALARQCLSKRLAAGCALARPLHAASPVA) constitute a mitochondrion transit peptide. Positions 104–219 (QVAETLTRPL…KRSVTEVKVR (116 aa)) constitute a sHSP domain.

The protein belongs to the small heat shock protein (HSP20) family. As to quaternary structure, may form oligomeric structures.

The protein resides in the mitochondrion. The protein is 23.6 kDa heat shock protein, mitochondrial (HSP23.6) of Oryza sativa subsp. japonica (Rice).